A 114-amino-acid polypeptide reads, in one-letter code: Flagellar hook-basal body complex protein FliE (114 aa).

This sequence belongs to the FliE family.

It is found in the bacterial flagellum basal body. The polypeptide is Flagellar hook-basal body complex protein FliE (Burkholderia vietnamiensis (strain G4 / LMG 22486) (Burkholderia cepacia (strain R1808))).